Here is a 228-residue protein sequence, read N- to C-terminus: Uracil-DNA glycosylase (228 aa).

Aspartate 65 acts as the Proton acceptor in catalysis.

It belongs to the uracil-DNA glycosylase (UDG) superfamily. UNG family.

The protein resides in the cytoplasm. It catalyses the reaction Hydrolyzes single-stranded DNA or mismatched double-stranded DNA and polynucleotides, releasing free uracil.. Its function is as follows. Excises uracil residues from the DNA which can arise as a result of misincorporation of dUMP residues by DNA polymerase or due to deamination of cytosine. This chain is Uracil-DNA glycosylase, found in Lacticaseibacillus paracasei (strain ATCC 334 / BCRC 17002 / CCUG 31169 / CIP 107868 / KCTC 3260 / NRRL B-441) (Lactobacillus paracasei).